A 593-amino-acid polypeptide reads, in one-letter code: SPI-1 type 3 secretion system translocon protein SctE (593 aa).

Coiled coils occupy residues D151–A208 and E287–M314. 2 helical membrane passes run V330 to V350 and I409 to V429.

Belongs to the SctE/SipB/YopB family. As to quaternary structure, the core secretion machinery of the T3SS is composed of approximately 20 different proteins, including cytoplasmic components, a base, an export apparatus and a needle. This subunit is involved in the formation of a pore, called the translocon, in host membrane.

The protein localises to the secreted. It is found in the host membrane. Its subcellular location is the host cell. Component of the type III secretion system 1 (SPI-1 T3SS), also called injectisome, which is used to inject bacterial effector proteins into eukaryotic host cells. SipB/SctE1 and SipC/SctB are inserted into the host membrane where they form a pore and allow the translocation of effector proteins into the cytosol of target cells. Functionally, induces macrophage apoptosis either by binding and activating the proapoptotic enzyme caspase-1 (caspase-1 dependent), resulting in the release of interleukin-1 beta active form, or by disrupting mitochondria and inducing autophagy (caspase-1 independent). The former is dependent of its membrane-fusion activity. The sequence is that of SPI-1 type 3 secretion system translocon protein SctE from Salmonella typhi.